Consider the following 54-residue polypeptide: Photosystem II reaction center protein L (54 aa).

The helical transmembrane segment at 33–53 (SLFWGLLLIFVLAVLFSSYIF) threads the bilayer.

The protein belongs to the PsbL family. In terms of assembly, PSII is composed of 1 copy each of membrane proteins PsbA, PsbB, PsbC, PsbD, PsbE, PsbF, PsbH, PsbI, PsbJ, PsbK, PsbL, PsbM, PsbT, PsbX, PsbY, PsbZ, Psb30/Ycf12, at least 3 peripheral proteins of the oxygen-evolving complex and a large number of cofactors. It forms dimeric complexes.

The protein resides in the plastid. It is found in the chloroplast thylakoid membrane. Its function is as follows. One of the components of the core complex of photosystem II (PSII). PSII is a light-driven water:plastoquinone oxidoreductase that uses light energy to abstract electrons from H(2)O, generating O(2) and a proton gradient subsequently used for ATP formation. It consists of a core antenna complex that captures photons, and an electron transfer chain that converts photonic excitation into a charge separation. This subunit is found at the monomer-monomer interface and is required for correct PSII assembly and/or dimerization. This chain is Photosystem II reaction center protein L, found in Stigeoclonium helveticum (Green alga).